The primary structure comprises 401 residues: 8-amino-7-oxononanoate synthase (401 aa).

Substrate is bound at residue Arg24. Gly111–Phe112 lines the pyridoxal 5'-phosphate pocket. Position 137 (His137) interacts with substrate. Ser183, His211, and Thr240 together coordinate pyridoxal 5'-phosphate. The residue at position 243 (Lys243) is an N6-(pyridoxal phosphate)lysine. Residue Thr357 coordinates substrate.

This sequence belongs to the class-II pyridoxal-phosphate-dependent aminotransferase family. BioF subfamily. As to quaternary structure, homodimer. It depends on pyridoxal 5'-phosphate as a cofactor.

The catalysed reaction is 6-carboxyhexanoyl-[ACP] + L-alanine + H(+) = (8S)-8-amino-7-oxononanoate + holo-[ACP] + CO2. It functions in the pathway cofactor biosynthesis; biotin biosynthesis. In terms of biological role, catalyzes the decarboxylative condensation of pimeloyl-[acyl-carrier protein] and L-alanine to produce 8-amino-7-oxononanoate (AON), [acyl-carrier protein], and carbon dioxide. The chain is 8-amino-7-oxononanoate synthase from Xanthomonas campestris pv. campestris (strain B100).